A 179-amino-acid chain; its full sequence is Alkyl hydroperoxide reductase AhpD (179 aa).

C130 serves as the catalytic Proton donor. C130 and C133 are disulfide-bonded. The Cysteine sulfenic acid (-SOH) intermediate role is filled by C133.

The protein belongs to the AhpD family. Homotrimer.

The enzyme catalyses N(6)-[(R)-dihydrolipoyl]-L-lysyl-[lipoyl-carrier protein] + a hydroperoxide = N(6)-[(R)-lipoyl]-L-lysyl-[lipoyl-carrier protein] + an alcohol + H2O. Its function is as follows. Antioxidant protein with alkyl hydroperoxidase activity. Required for the reduction of the AhpC active site cysteine residues and for the regeneration of the AhpC enzyme activity. This chain is Alkyl hydroperoxide reductase AhpD, found in Nocardia farcinica (strain IFM 10152).